A 546-amino-acid chain; its full sequence is CTP synthase (546 aa).

Positions 1-267 are amidoligase domain; that stretch reads MSKFVFVTGG…AQQTLELLNL (267 aa). Serine 13 serves as a coordination point for CTP. Residue serine 13 participates in UTP binding. Residues 14 to 19 and aspartate 71 contribute to the ATP site; that span reads SIGKGI. Positions 71 and 141 each coordinate Mg(2+). CTP-binding positions include 148-150, 188-193, and lysine 224; these read DIE and KTKPTQ. Residues 188–193 and lysine 224 each bind UTP; that span reads KTKPTQ. Residues 292–534 enclose the Glutamine amidotransferase type-1 domain; sequence EIAIVGKYVQ…MKAALKGREE (243 aa). An L-glutamine-binding site is contributed by glycine 354. Catalysis depends on cysteine 381, which acts as the Nucleophile; for glutamine hydrolysis. L-glutamine-binding positions include 382–385, glutamate 405, and arginine 462; that span reads LGMQ. Active-site residues include histidine 507 and glutamate 509.

Belongs to the CTP synthase family. Homotetramer.

It carries out the reaction UTP + L-glutamine + ATP + H2O = CTP + L-glutamate + ADP + phosphate + 2 H(+). The enzyme catalyses L-glutamine + H2O = L-glutamate + NH4(+). The catalysed reaction is UTP + NH4(+) + ATP = CTP + ADP + phosphate + 2 H(+). The protein operates within pyrimidine metabolism; CTP biosynthesis via de novo pathway; CTP from UDP: step 2/2. With respect to regulation, allosterically activated by GTP, when glutamine is the substrate; GTP has no effect on the reaction when ammonia is the substrate. The allosteric effector GTP functions by stabilizing the protein conformation that binds the tetrahedral intermediate(s) formed during glutamine hydrolysis. Inhibited by the product CTP, via allosteric rather than competitive inhibition. Its function is as follows. Catalyzes the ATP-dependent amination of UTP to CTP with either L-glutamine or ammonia as the source of nitrogen. Regulates intracellular CTP levels through interactions with the four ribonucleotide triphosphates. The polypeptide is CTP synthase (Microcystis aeruginosa (strain NIES-843 / IAM M-2473)).